A 403-amino-acid chain; its full sequence is Argininosuccinate synthase (403 aa).

10–18 is an ATP binding site; sequence AYSGGLDTS. Residue Tyr87 coordinates L-citrulline. Gly117 lines the ATP pocket. L-aspartate contacts are provided by Thr119, Asn123, and Asp124. Asn123 contributes to the L-citrulline binding site. 5 residues coordinate L-citrulline: Arg127, Ser175, Ser184, Glu260, and Tyr272.

It belongs to the argininosuccinate synthase family. Type 1 subfamily. In terms of assembly, homotetramer.

It localises to the cytoplasm. The catalysed reaction is L-citrulline + L-aspartate + ATP = 2-(N(omega)-L-arginino)succinate + AMP + diphosphate + H(+). Its pathway is amino-acid biosynthesis; L-arginine biosynthesis; L-arginine from L-ornithine and carbamoyl phosphate: step 2/3. This is Argininosuccinate synthase from Bacillus licheniformis (strain ATCC 14580 / DSM 13 / JCM 2505 / CCUG 7422 / NBRC 12200 / NCIMB 9375 / NCTC 10341 / NRRL NRS-1264 / Gibson 46).